Reading from the N-terminus, the 491-residue chain is Monocarboxylate transport permease protein (491 aa).

13 helical membrane-spanning segments follow: residues 7-27, 55-75, 83-103, 130-150, 157-177, 187-207, 246-266, 277-297, 322-342, 374-396, 400-422, 427-447, and 465-485; these read GTALAVFIFFFVLVTVMGFVA, WFLVGGDFYTAYTVIAVPALV, FFALPYTIVVYPFVFMVMPVL, LAVAATGVIATMPYIALQLVG, ALGLHGELPLAIAFIVLALYT, LIAFVKDIMIYIVVIAAVALI, LALGSALAAFMYPHTLTGIFA, AIMLPAYTLLLGLLALLGYMG, WFSGFAFAAIAIGALVPAAVM, ITSLVVKVGALLVIIFLPTQFAL, LLGGIWILQTLPALVFGLYTNWF, LLAGWFVGFGGGTFLVWDAGW, and GLLALAANIAVAVVVNALLPA.

The protein belongs to the sodium:solute symporter (SSF) (TC 2.A.21) family.

The protein resides in the cell membrane. Its activity is regulated as follows. Inhibited by CCCP, but is apparently not affected by the concentration of sodium. Its function is as follows. Low-affinity transporter of alanine and high-affinity transporter of lactate and pyruvate. Can also transport other monocarboxylates such as propionate, butyrate, alpha-hydroxybutyrate or acetate. May be proton coupled. Required for optimal growth on alanine or pyruvate and ammonia. In Rhizobium johnstonii (strain DSM 114642 / LMG 32736 / 3841) (Rhizobium leguminosarum bv. viciae), this protein is Monocarboxylate transport permease protein.